The sequence spans 250 residues: 2,3-bisphosphoglycerate-dependent phosphoglycerate mutase (250 aa).

Residues 10–17 (RHGESQWN), 23–24 (TG), Arg-62, 89–92 (ERHY), Lys-100, 116–117 (RR), and 185–186 (GN) contribute to the substrate site. The active-site Tele-phosphohistidine intermediate is the His-11. The active-site Proton donor/acceptor is Glu-89.

This sequence belongs to the phosphoglycerate mutase family. BPG-dependent PGAM subfamily. In terms of assembly, homodimer.

The enzyme catalyses (2R)-2-phosphoglycerate = (2R)-3-phosphoglycerate. It functions in the pathway carbohydrate degradation; glycolysis; pyruvate from D-glyceraldehyde 3-phosphate: step 3/5. Catalyzes the interconversion of 2-phosphoglycerate and 3-phosphoglycerate. The sequence is that of 2,3-bisphosphoglycerate-dependent phosphoglycerate mutase from Salmonella paratyphi A (strain ATCC 9150 / SARB42).